The following is a 344-amino-acid chain: Protein L-Myc-1-B (344 aa).

2 stretches are compositionally biased toward polar residues: residues G104 to K113 and N213 to S223. 2 disordered regions span residues G104 to I162 and L208 to R271. Positions D259 to E270 are enriched in basic and acidic residues. In terms of domain architecture, bHLH spans A261–L313. The tract at residues L313–L341 is leucine-zipper.

As to quaternary structure, efficient DNA binding requires dimerization with another bHLH protein. Binds DNA as a heterodimer with MAX. As to expression, high levels in oocytes, modest levels in kidney and low levels in spleen.

The protein resides in the nucleus. The protein is Protein L-Myc-1-B (mycl1-b) of Xenopus laevis (African clawed frog).